The primary structure comprises 906 residues: Protein translocase subunit SecA (906 aa).

Residues Gln-86, 104-108 (GEGKT), and Asp-511 each bind ATP. Basic and acidic residues predominate over residues 852–888 (EHESVIDNNQRHDEDEQEEAPKVKQVRREGPKVKRND). The interval 852-906 (EHESVIDNNQRHDEDEQEEAPKVKQVRREGPKVKRNDPCPCGSGKKYKQCHSKVE) is disordered. 4 residues coordinate Zn(2+): Cys-890, Cys-892, Cys-901, and His-902. Positions 896–906 (KKYKQCHSKVE) are enriched in basic residues.

This sequence belongs to the SecA family. Monomer and homodimer. Part of the essential Sec protein translocation apparatus which comprises SecA, SecYEG and auxiliary proteins SecDF-YajC and YidC. Requires Zn(2+) as cofactor.

It is found in the cell inner membrane. Its subcellular location is the cytoplasm. The catalysed reaction is ATP + H2O + cellular proteinSide 1 = ADP + phosphate + cellular proteinSide 2.. In terms of biological role, part of the Sec protein translocase complex. Interacts with the SecYEG preprotein conducting channel. Has a central role in coupling the hydrolysis of ATP to the transfer of proteins into and across the cell membrane, serving both as a receptor for the preprotein-SecB complex and as an ATP-driven molecular motor driving the stepwise translocation of polypeptide chains across the membrane. The chain is Protein translocase subunit SecA from Francisella tularensis subsp. tularensis (strain SCHU S4 / Schu 4).